Reading from the N-terminus, the 130-residue chain is MSMQDPIADMLTRIRNGQAANKAAVTMPSSKLKVAIANVLKEEGFIEDFKVEGDIKPELELTLKYFQGKAVVESIQRVSRPGLRIYKRKDELPKVMAGLGIAVVSTSKGVMTDRAARQAGLGGEIICYVA.

It belongs to the universal ribosomal protein uS8 family. Part of the 30S ribosomal subunit. Contacts proteins S5 and S12.

One of the primary rRNA binding proteins, it binds directly to 16S rRNA central domain where it helps coordinate assembly of the platform of the 30S subunit. The protein is Small ribosomal subunit protein uS8 of Klebsiella pneumoniae (strain 342).